We begin with the raw amino-acid sequence, 1775 residues long: Atrochrysone carboxylic acid synthase (1775 aa).

Positions 29 to 258 (RSQSKTESGW…QLPVYGGLCH (230 aa)) are N-terminal acylcarrier protein transacylase domain (SAT). The region spanning 391–821 (DSSIAIVGMA…GGNTSLLIEE (431 aa)) is the Ketosynthase family 3 (KS3) domain. Active-site for beta-ketoacyl synthase activity residues include Cys564, His699, and His740. The interval 921–1241 (FVFSGQGSFY…MAQLHNLGVD (321 aa)) is malonyl-CoA:ACP transacylase (MAT) domain. The interval 1305 to 1626 (TSLVHRLVCE…RSLINTFFSP (322 aa)) is product template (PT) domain. The interval 1309-1455 (HRLVCESVQE…WLEEWSPMTH (147 aa)) is N-terminal hotdog fold. The PKS/mFAS DH domain occupies 1309-1621 (HRLVCESVQE…FRTFPRSLIN (313 aa)). His1341 (proton acceptor; for dehydratase activity) is an active-site residue. The interval 1472–1621 (TANRLSRDMV…FRTFPRSLIN (150 aa)) is C-terminal hotdog fold. Asp1532 functions as the Proton donor; for dehydratase activity in the catalytic mechanism. Residues 1672–1694 (SRTVMDSSDSSPATTLTPPTLPS) are disordered. Residues 1677–1689 (DSSDSSPATTLTP) are compositionally biased toward low complexity. Residues 1698–1775 (STESPIVHRA…DLKAWLIDYC (78 aa)) form the Carrier domain. Ser1735 is modified (O-(pantetheine 4'-phosphoryl)serine).

In terms of tissue distribution, endocrocin is specifically produced in conidia.

The enzyme catalyses holo-[ACP] + 8 malonyl-CoA + 8 H(+) = atrochrysone carboxyl-[ACP] + 8 CO2 + 8 CoA + 2 H2O. Its pathway is secondary metabolite biosynthesis. Functionally, non-reducing polyketide synthase; part of the gene cluster that mediates the biosynthesis of endocrocin, a simple anthraquinone interesting for many biotechnological applications. The pathway begins with the synthesis of atrochrysone thioester by the polyketide synthase (PKS) encA. The atrochrysone carboxyl ACP thioesterase encB then breaks the thioester bond and releases the atrochrysone carboxylic acid from encA. The atrochrysone carboxylic acid is then converted to endocrocin anthrone which is further oxidized into endocrocin by the anthrone oxygenase encC. The exact function of encD has not been identified yet, but it negatively regulates endocrocin production, likely through the modification of endocrocin itself. The chain is Atrochrysone carboxylic acid synthase from Aspergillus fumigatus (strain ATCC MYA-4609 / CBS 101355 / FGSC A1100 / Af293) (Neosartorya fumigata).